Reading from the N-terminus, the 428-residue chain is Phosphomethylpyrimidine synthase (428 aa).

Substrate contacts are provided by residues N66, M94, Y123, H162, 184–186 (SRG), 225–228 (DALR), and E264. H268 provides a ligand contact to Zn(2+). Residue Y291 coordinates substrate. A Zn(2+)-binding site is contributed by H332. The [4Fe-4S] cluster site is built by C408, C411, and C415.

This sequence belongs to the ThiC family. The cofactor is [4Fe-4S] cluster.

It carries out the reaction 5-amino-1-(5-phospho-beta-D-ribosyl)imidazole + S-adenosyl-L-methionine = 4-amino-2-methyl-5-(phosphooxymethyl)pyrimidine + CO + 5'-deoxyadenosine + formate + L-methionine + 3 H(+). It functions in the pathway cofactor biosynthesis; thiamine diphosphate biosynthesis. Functionally, catalyzes the synthesis of the hydroxymethylpyrimidine phosphate (HMP-P) moiety of thiamine from aminoimidazole ribotide (AIR) in a radical S-adenosyl-L-methionine (SAM)-dependent reaction. The sequence is that of Phosphomethylpyrimidine synthase from Sulfolobus acidocaldarius (strain ATCC 33909 / DSM 639 / JCM 8929 / NBRC 15157 / NCIMB 11770).